We begin with the raw amino-acid sequence, 259 residues long: tRNA-cytidine(32) 2-sulfurtransferase (259 aa).

The PP-loop motif motif lies at 37–42 (SGGKDS). Positions 112, 115, and 202 each coordinate [4Fe-4S] cluster.

It belongs to the TtcA family. As to quaternary structure, homodimer. Mg(2+) is required as a cofactor. [4Fe-4S] cluster serves as cofactor.

The protein resides in the cytoplasm. The enzyme catalyses cytidine(32) in tRNA + S-sulfanyl-L-cysteinyl-[cysteine desulfurase] + AH2 + ATP = 2-thiocytidine(32) in tRNA + L-cysteinyl-[cysteine desulfurase] + A + AMP + diphosphate + H(+). Its pathway is tRNA modification. Catalyzes the ATP-dependent 2-thiolation of cytidine in position 32 of tRNA, to form 2-thiocytidine (s(2)C32). The sulfur atoms are provided by the cysteine/cysteine desulfurase (IscS) system. This Syntrophotalea carbinolica (strain DSM 2380 / NBRC 103641 / GraBd1) (Pelobacter carbinolicus) protein is tRNA-cytidine(32) 2-sulfurtransferase.